A 99-amino-acid polypeptide reads, in one-letter code: Large ribosomal subunit protein bL27 (99 aa).

Positions 1 to 9 (MLIMNLQLF) are excised as a propeptide.

This sequence belongs to the bacterial ribosomal protein bL27 family. The N-terminus is cleaved by ribosomal processing cysteine protease Prp.

This chain is Large ribosomal subunit protein bL27, found in Clostridium beijerinckii (strain ATCC 51743 / NCIMB 8052) (Clostridium acetobutylicum).